Reading from the N-terminus, the 214-residue chain is ATP phosphoribosyltransferase (214 aa).

This sequence belongs to the ATP phosphoribosyltransferase family. Short subfamily. As to quaternary structure, heteromultimer composed of HisG and HisZ subunits.

The protein resides in the cytoplasm. The catalysed reaction is 1-(5-phospho-beta-D-ribosyl)-ATP + diphosphate = 5-phospho-alpha-D-ribose 1-diphosphate + ATP. Its pathway is amino-acid biosynthesis; L-histidine biosynthesis; L-histidine from 5-phospho-alpha-D-ribose 1-diphosphate: step 1/9. Catalyzes the condensation of ATP and 5-phosphoribose 1-diphosphate to form N'-(5'-phosphoribosyl)-ATP (PR-ATP). Has a crucial role in the pathway because the rate of histidine biosynthesis seems to be controlled primarily by regulation of HisG enzymatic activity. In Nostoc punctiforme (strain ATCC 29133 / PCC 73102), this protein is ATP phosphoribosyltransferase.